The primary structure comprises 217 residues: N-(5'-phosphoribosyl)anthranilate isomerase (217 aa).

The protein belongs to the TrpF family.

It carries out the reaction N-(5-phospho-beta-D-ribosyl)anthranilate = 1-(2-carboxyphenylamino)-1-deoxy-D-ribulose 5-phosphate. It functions in the pathway amino-acid biosynthesis; L-tryptophan biosynthesis; L-tryptophan from chorismate: step 3/5. The protein is N-(5'-phosphoribosyl)anthranilate isomerase of Chlorobium luteolum (strain DSM 273 / BCRC 81028 / 2530) (Pelodictyon luteolum).